Reading from the N-terminus, the 132-residue chain is T-cell receptor alpha chain V region CTL-F3 (132 aa).

A signal peptide spans 1-22 (MNMRPDTCSVLVLLLMLRRNNG). Positions 23 to 114 (DSVTQTEGLV…DSALYYCALS (92 aa)) are v segment. N-linked (GlcNAc...) asparagine glycosylation is present at Asn-43. A disulfide bridge links Cys-44 with Cys-111. The interval 115–132 (NAGAKLTFGGGTRLTVRP) is j segment.

This is T-cell receptor alpha chain V region CTL-F3 from Mus musculus (Mouse).